We begin with the raw amino-acid sequence, 271 residues long: Hydroxyethylthiazole kinase (271 aa).

Met-46 serves as a coordination point for substrate. Residues Arg-122 and Thr-169 each coordinate ATP. Gly-196 is a substrate binding site.

This sequence belongs to the Thz kinase family. The cofactor is Mg(2+).

The enzyme catalyses 5-(2-hydroxyethyl)-4-methylthiazole + ATP = 4-methyl-5-(2-phosphooxyethyl)-thiazole + ADP + H(+). Its pathway is cofactor biosynthesis; thiamine diphosphate biosynthesis; 4-methyl-5-(2-phosphoethyl)-thiazole from 5-(2-hydroxyethyl)-4-methylthiazole: step 1/1. Its function is as follows. Catalyzes the phosphorylation of the hydroxyl group of 4-methyl-5-beta-hydroxyethylthiazole (THZ). This is Hydroxyethylthiazole kinase from Alkaliphilus oremlandii (strain OhILAs) (Clostridium oremlandii (strain OhILAs)).